A 420-amino-acid polypeptide reads, in one-letter code: Bile acid-CoA:amino acid N-acyltransferase (420 aa).

Position 40 is an N6-succinyllysine (Lys40). The residue at position 125 (Ser125) is a Phosphoserine. Catalysis depends on charge relay system residues Cys235 and Asp328. Residues Lys346 and Lys350 each carry the N6-succinyllysine modification. The Charge relay system role is filled by His362. The residue at position 409 (Lys409) is an N6-succinyllysine. Phosphoserine is present on Ser418.

Belongs to the C/M/P thioester hydrolase family. As to quaternary structure, monomer. As to expression, highly expressed in liver, kidney, gallbladder, proximal intestine and distal intestine. Weakly expressed in adrenal gland, lung, brain and muscle.

The protein resides in the cytoplasm. The protein localises to the cytosol. Its subcellular location is the peroxisome. It carries out the reaction choloyl-CoA + glycine = glycocholate + CoA + H(+). It catalyses the reaction hexadecanoyl-CoA + H2O = hexadecanoate + CoA + H(+). The catalysed reaction is choloyl-CoA + H2O = cholate + CoA + H(+). The enzyme catalyses chenodeoxycholoyl-CoA + H2O = chenodeoxycholate + CoA + H(+). It carries out the reaction eicosanoyl-CoA + H2O = eicosanoate + CoA + H(+). It catalyses the reaction octadecanoyl-CoA + H2O = octadecanoate + CoA + H(+). The catalysed reaction is docosanoyl-CoA + H2O = docosanoate + CoA + H(+). The enzyme catalyses tetracosanoyl-CoA + H2O = tetracosanoate + CoA + H(+). It carries out the reaction hexacosanoyl-CoA + H2O = hexacosanoate + CoA + H(+). It catalyses the reaction dodecanoyl-CoA + H2O = dodecanoate + CoA + H(+). The catalysed reaction is tetradecanoyl-CoA + H2O = tetradecanoate + CoA + H(+). The enzyme catalyses choloyl-CoA + taurine = taurocholate + CoA + H(+). It carries out the reaction chenodeoxycholoyl-CoA + glycine = glycochenodeoxycholate + CoA + H(+). It catalyses the reaction chenodeoxycholoyl-CoA + taurine = taurochenodeoxycholate + CoA + H(+). The catalysed reaction is eicosanoyl-CoA + glycine = N-eicosanoylglycinate + CoA + H(+). The enzyme catalyses hexacosanoyl-CoA + glycine = N-hexacosanoylglycine + CoA + H(+). It carries out the reaction docosanoyl-CoA + glycine = N-docosanoylglycine + CoA + H(+). Functionally, catalyzes the amidation of bile acids (BAs) with the amino acid taurine. Selective for taurine conjugation of cholyl CoA and only taurine-conjugated BAs are found in bile. Amidation of BAs in the liver with taurine prior to their excretion into bile is an important biochemical event in bile acid metabolism. This conjugation (or amidation) plays several important biological roles in that it promotes the secretion of BAs and cholesterol into bile and increases the detergent properties of BAs in the intestine, which facilitates lipid and vitamin absorption. May also act as an acyl-CoA thioesterase that regulates intracellular levels of free fatty acids. In vitro, catalyzes the hydrolysis of long- and very long-chain saturated acyl-CoAs to the free fatty acid and coenzyme A (CoASH), and conjugates glycine to these acyl-CoAs. The polypeptide is Bile acid-CoA:amino acid N-acyltransferase (Baat) (Mus musculus (Mouse)).